The sequence spans 271 residues: MVLTAVLLLLAACAGSAQGLGSFVHCEPCDEKALSMCPPSPLGCELVKEPGCGCCMTCALAEGQSCGVYTERCAQGLRCLPRQDEEKPLHALLHGRGVCLNEKSYREQAKIERDSREHEEPTTSEMAEETYSPKIFRPKHTRISELKAEAVKKDRRKKLTQSKFVGGAENTAHPRVISAPEMRQKSEQGPCRRHMEASLQELKASPRMVPRAVYLPNCDRKGFYKRKQCKPSRGRKRGICWCVDKYGMKLPGMEYVDGDFQCHTFDSSNVE.

A signal peptide spans 1 to 19; that stretch reads MVLTAVLLLLAACAGSAQG. The IGFBP N-terminal domain occupies 22–102; it reads SFVHCEPCDE…LHGRGVCLNE (81 aa). Intrachain disulfides connect C26/C52, C29/C54, C37/C55, C44/C58, C66/C79, and C73/C99. Residues 109–121 are compositionally biased toward basic and acidic residues; the sequence is AKIERDSREHEEP. The tract at residues 109–129 is disordered; that stretch reads AKIERDSREHEEPTTSEMAEE. S115 carries the post-translational modification Phosphoserine. Positions 188–262 constitute a Thyroglobulin type-1 domain; the sequence is QGPCRRHMEA…MEYVDGDFQC (75 aa). 3 disulfide bridges follow: C191–C218, C229–C240, and C242–C262.

Interacts with IGF1; this interaction enhances the growth stimulatory effects of IGF1 on fibroblasts. Interacts with CAV1; this interaction allows trafficking of IGFBP5 from the plasma membrane to the nucleus. Interacts with NCL; this interaction is necessary for IGFBP5 localization to the nucleus.

Its subcellular location is the secreted. It is found in the cytoplasm. It localises to the nucleus. In terms of biological role, multifunctional protein that plays a critical role in regulating the availability of IGFs to their receptors and thereby regulates IGF-mediated cellular processes including proliferation, differentiation, and apoptosis in a cell-type specific manner. Increases the cell proliferation of osteoblasts, intestinal smooth muscle cells and neuroblastoma cells. Enhances adhesion and survival of epithelial cells but decreases adhesion of mesenchymal cells. Once secreted, acts as a major mediator of mTORC1-dependent feedback inhibition of IGF1 signaling. Also plays a role in the induction of extracellular matrix (ECM) production and deposition independently of its nuclear translocation and binding to IGFs. Acts itself as a growth factor that can act independently of IGFs to regulate bone formation. Acts as a ligand for the ROR1 receptor which triggers formation of ROR1/HER2 heterodimer to enhance CREB oncogenic signaling. This Bos taurus (Bovine) protein is Insulin-like growth factor-binding protein 5 (IGFBP5).